A 271-amino-acid polypeptide reads, in one-letter code: Inactive phospholipid phosphatase 7 (271 aa).

Residues 1–69 (MPVSQSRARA…RQSQQLPEED (69 aa)) are disordered. Over 1-112 (MPVSQSRARA…AASWASARSM (112 aa)) the chain is Cytoplasmic. Positions 24–36 (SLNQPPKGTQEPR) are enriched in polar residues. Serine 43 and serine 62 each carry phosphoserine. The tract at residues 70–91 (CMQLNPSFKGIAFNSLLAIDIC) is interaction with MTOR. A helical membrane pass occupies residues 113–133 (VKLIGITSHGIPWIGGTILCL). Topologically, residues 134–141 (VRSSTLAG) are extracellular. The helical transmembrane segment at 142-162 (QEVLMNLLLALLLDIMTVAGV) threads the bilayer. Topologically, residues 163–202 (QKLIKRRGPYETSPGLLDYLTMDIYAFPAGHASRAAMVSK) are cytoplasmic. Residues 203-223 (FFLSHLVLAVPLRVLLVLWAF) form a helical membrane-spanning segment. Residues 224-239 (CVGLSRVMIGRHHITD) lie on the Extracellular side of the membrane. A helical membrane pass occupies residues 240 to 260 (VISGFIIGYFQFRLVELVWMS). At 261 to 271 (SNTCQMLISAW) the chain is on the cytoplasmic side.

The protein belongs to the PA-phosphatase related phosphoesterase family. In terms of assembly, homo- and heterooligomer. Interacts with MTOR; controls MTOR-dependent IGF2 expression during myoblast differentiation.

Its subcellular location is the nucleus envelope. It is found in the endoplasmic reticulum membrane. It localises to the membrane. Functionally, plays a role as negative regulator of myoblast differentiation, in part through effects on MTOR signaling. Has no detectable enzymatic activity. The polypeptide is Inactive phospholipid phosphatase 7 (Rattus norvegicus (Rat)).